A 185-amino-acid polypeptide reads, in one-letter code: Ribosome-recycling factor (185 aa).

This sequence belongs to the RRF family.

The protein resides in the cytoplasm. Responsible for the release of ribosomes from messenger RNA at the termination of protein biosynthesis. May increase the efficiency of translation by recycling ribosomes from one round of translation to another. The protein is Ribosome-recycling factor of Teredinibacter turnerae (strain ATCC 39867 / T7901).